Reading from the N-terminus, the 800-residue chain is Phenylalanine--tRNA ligase beta subunit (800 aa).

Residues 39–154 (TKDIKNLVVG…EAQVPGTDAL (116 aa)) form the tRNA-binding domain. In terms of domain architecture, B5 spans 408–483 (AFITPIDITA…RIYGYDDIPS (76 aa)). Residues Asp461, Asp467, Glu470, and Glu471 each coordinate Mg(2+). One can recognise an FDX-ACB domain in the interval 708 to 800 (PRFPGMSRDI…ALIEQGAVIR (93 aa)).

The protein belongs to the phenylalanyl-tRNA synthetase beta subunit family. Type 1 subfamily. Tetramer of two alpha and two beta subunits. Requires Mg(2+) as cofactor.

It localises to the cytoplasm. It catalyses the reaction tRNA(Phe) + L-phenylalanine + ATP = L-phenylalanyl-tRNA(Phe) + AMP + diphosphate + H(+). In Staphylococcus aureus (strain USA300), this protein is Phenylalanine--tRNA ligase beta subunit.